Reading from the N-terminus, the 346-residue chain is Phosphate acyltransferase (346 aa).

The protein belongs to the PlsX family. As to quaternary structure, homodimer. Probably interacts with PlsY.

Its subcellular location is the cytoplasm. It catalyses the reaction a fatty acyl-[ACP] + phosphate = an acyl phosphate + holo-[ACP]. It functions in the pathway lipid metabolism; phospholipid metabolism. In terms of biological role, catalyzes the reversible formation of acyl-phosphate (acyl-PO(4)) from acyl-[acyl-carrier-protein] (acyl-ACP). This enzyme utilizes acyl-ACP as fatty acyl donor, but not acyl-CoA. The chain is Phosphate acyltransferase from Brucella suis biovar 1 (strain 1330).